A 492-amino-acid chain; its full sequence is Glutamyl-tRNA(Gln) amidotransferase subunit A (492 aa).

Active-site charge relay system residues include Lys84 and Ser159. Ser183 serves as the catalytic Acyl-ester intermediate.

The protein belongs to the amidase family. GatA subfamily. As to quaternary structure, heterotrimer of A, B and C subunits.

The catalysed reaction is L-glutamyl-tRNA(Gln) + L-glutamine + ATP + H2O = L-glutaminyl-tRNA(Gln) + L-glutamate + ADP + phosphate + H(+). Functionally, allows the formation of correctly charged Gln-tRNA(Gln) through the transamidation of misacylated Glu-tRNA(Gln) in organisms which lack glutaminyl-tRNA synthetase. The reaction takes place in the presence of glutamine and ATP through an activated gamma-phospho-Glu-tRNA(Gln). In Anaeromyxobacter sp. (strain K), this protein is Glutamyl-tRNA(Gln) amidotransferase subunit A.